Here is an 835-residue protein sequence, read N- to C-terminus: Ion-translocating oxidoreductase complex subunit C (835 aa).

4Fe-4S ferredoxin-type domains lie at 368 to 397 (YAPP…QQLY) and 407 to 436 (KSEE…IQYF). [4Fe-4S] cluster-binding residues include Cys-377, Cys-380, Cys-383, Cys-387, Cys-416, Cys-419, Cys-422, and Cys-426. Positions 468 to 489 (AREEQERKARAQKAMEARRQEM) are enriched in basic and acidic residues. Disordered regions lie at residues 468–492 (AREE…MKTA), 540–574 (QRKA…SKSA), 586–618 (KAAQ…AEDP), 634–666 (KAAQ…ADDP), 682–714 (KAAQ…ADDP), 730–762 (KAAQ…AEDP), and 778–811 (KAAQ…EDPR). Residues 552-561 (TQNTDVSQVE) show a composition bias toward polar residues. Over residues 648-657 (SSSNTLSVGN) the composition is skewed to polar residues. Polar residues-rich tracts occupy residues 745-756 (SSDTLSVGNETE) and 793-804 (SSDTLSVGNETE).

It belongs to the 4Fe4S bacterial-type ferredoxin family. RnfC subfamily. In terms of assembly, the complex is composed of six subunits: RnfA, RnfB, RnfC, RnfD, RnfE and RnfG. [4Fe-4S] cluster serves as cofactor.

It is found in the cell inner membrane. In terms of biological role, part of a membrane-bound complex that couples electron transfer with translocation of ions across the membrane. The protein is Ion-translocating oxidoreductase complex subunit C of Pasteurella multocida (strain Pm70).